Consider the following 301-residue polypeptide: dTDP-4-dehydrorhamnose reductase (301 aa).

NADH contacts are provided by residues 10 to 12 (GQV), Asp30, 39 to 40 (DF), and 63 to 65 (AHT). NADPH is bound at residue 11-12 (QV). NADPH-binding positions include 39 to 40 (DF), 63 to 65 (AHT), and Tyr102. 104–105 (TD) is a binding site for dTDP-beta-L-rhamnose. Residues Tyr129 and Lys133 each coordinate NADH. NADPH contacts are provided by Tyr129 and Lys133. Tyr129 serves as the catalytic Proton donor/acceptor. DTDP-beta-L-rhamnose is bound at residue Trp155.

This sequence belongs to the dTDP-4-dehydrorhamnose reductase family. As to quaternary structure, homodimer. Mg(2+) is required as a cofactor.

The enzyme catalyses dTDP-beta-L-rhamnose + NADP(+) = dTDP-4-dehydro-beta-L-rhamnose + NADPH + H(+). The protein operates within carbohydrate biosynthesis; dTDP-L-rhamnose biosynthesis. It functions in the pathway bacterial outer membrane biogenesis; LPS O-antigen biosynthesis. Functionally, involved in the biosynthesis of the dTDP-L-rhamnose which is an important component of lipopolysaccharide (LPS). Catalyzes the reduction of dTDP-6-deoxy-L-lyxo-4-hexulose to yield dTDP-L-rhamnose. RmlD uses NADH and NADPH nearly equally well. The sequence is that of dTDP-4-dehydrorhamnose reductase from Escherichia coli.